The chain runs to 130 residues: Small ribosomal subunit protein uS8 (130 aa).

This sequence belongs to the universal ribosomal protein uS8 family. In terms of assembly, part of the 30S ribosomal subunit. Contacts proteins S5 and S12.

One of the primary rRNA binding proteins, it binds directly to 16S rRNA central domain where it helps coordinate assembly of the platform of the 30S subunit. This chain is Small ribosomal subunit protein uS8, found in Stutzerimonas stutzeri (strain A1501) (Pseudomonas stutzeri).